The sequence spans 463 residues: Probable cysteine protease RD21B (463 aa).

The first 21 residues, 1-21 (MGFLKLSPMILLLAMIGVSYA), serve as a signal peptide directing secretion. The propeptide at 22–137 (MDMSIISYDE…DRYQARVGDA (116 aa)) is activation peptide. Residue Asn92 is glycosylated (N-linked (GlcNAc...) asparagine). 5 disulfides stabilise this stretch: Cys159–Cys201, Cys193–Cys234, Cys292–Cys343, Cys376–Cys388, and Cys382–Cys403. The active site involves Cys162. Catalysis depends on residues His298 and Asn318. Residues 354-463 (KKGQNPPNPG…FWAKSRKHIA (110 aa)) constitute a propeptide, removed in mature form. N-linked (GlcNAc...) asparagine glycosylation occurs at Asn415.

It belongs to the peptidase C1 family. In terms of assembly, interacts with PRN2. Interacts with WSCP.

In terms of biological role, probable thiol protease. The chain is Probable cysteine protease RD21B from Arabidopsis thaliana (Mouse-ear cress).